The sequence spans 384 residues: Na(+)/H(+) antiporter NhaA (384 aa).

The next 11 membrane-spanning stretches (helical) occupy residues 17–37 (SGLFLISCTLFSLVIANSAIA), 53–73 (LEYWINDGLMTIFFLLIGLEL), 89–109 (MLPIFGAIGGMIVPAGLFLVM), 118–138 (GAGIPMATDIAFALAILSLLG), 147–167 (IFLTALAVIDDLGAILIIAVF), 171–191 (TLLWTNLCIALGIFGFLLILN), 198–218 (LIPYLIGGVFMWYFMLHSGVH), 251–271 (PVAFFILPLFALANTAIVLSS), 283–303 (IGIALGLIIGKPLGIFLLSML), 321–341 (ILAVGFLGGIGFTMSIFITLL), and 354–374 (FVILISSLIAGIIGYFSLKYV).

The protein belongs to the NhaA Na(+)/H(+) (TC 2.A.33) antiporter family.

Its subcellular location is the cell inner membrane. The catalysed reaction is Na(+)(in) + 2 H(+)(out) = Na(+)(out) + 2 H(+)(in). In terms of biological role, na(+)/H(+) antiporter that extrudes sodium in exchange for external protons. The protein is Na(+)/H(+) antiporter NhaA of Flavobacterium psychrophilum (strain ATCC 49511 / DSM 21280 / CIP 103535 / JIP02/86).